Reading from the N-terminus, the 405-residue chain is Phosphoglycerate kinase (405 aa).

Residues 24 to 26, Arg-40, 63 to 66, Arg-122, and Arg-162 contribute to the substrate site; these read DFN and HLGR. ATP contacts are provided by residues Lys-213, Glu-332, and 361–364; that span reads GGDS.

Belongs to the phosphoglycerate kinase family. As to quaternary structure, monomer.

The protein localises to the cytoplasm. It catalyses the reaction (2R)-3-phosphoglycerate + ATP = (2R)-3-phospho-glyceroyl phosphate + ADP. The protein operates within carbohydrate degradation; glycolysis; pyruvate from D-glyceraldehyde 3-phosphate: step 2/5. This Corynebacterium diphtheriae (strain ATCC 700971 / NCTC 13129 / Biotype gravis) protein is Phosphoglycerate kinase.